Reading from the N-terminus, the 235-residue chain is Large ribosomal subunit protein uL1 (235 aa).

Belongs to the universal ribosomal protein uL1 family. Part of the 50S ribosomal subunit.

Binds directly to 23S rRNA. The L1 stalk is quite mobile in the ribosome, and is involved in E site tRNA release. Its function is as follows. Protein L1 is also a translational repressor protein, it controls the translation of the L11 operon by binding to its mRNA. This Mycolicibacterium vanbaalenii (strain DSM 7251 / JCM 13017 / BCRC 16820 / KCTC 9966 / NRRL B-24157 / PYR-1) (Mycobacterium vanbaalenii) protein is Large ribosomal subunit protein uL1.